Here is a 986-residue protein sequence, read N- to C-terminus: Translation initiation factor IF-2 (986 aa).

Residues 49 to 59 (EFAKDNAKGDS) are compositionally biased toward basic and acidic residues. The tract at residues 49–370 (EFAKDNAKGD…KNRLAKRHEY (322 aa)) is disordered. Over residues 60–112 (KPASSAQKPAAKPVQQRRPAAPSAPASTSSSAPTPAAPARQASPASAHQQAPT) the composition is skewed to low complexity. Over residues 135–168 (GQHDNRENGRDNREGRENGRQSRPNDRRNNDRRN) the composition is skewed to basic and acidic residues. Residues 170 to 182 (QGRPNNGQPGQHQ) show a composition bias toward low complexity. Gly residues-rich tracts occupy residues 254 to 286 (GRGG…GGPR) and 296 to 353 (GQGG…GRQG). Basic residues predominate over residues 357-366 (SKARKNRLAK). Residues 479–651 (PRPPVVTVMG…VLLTADAELD (173 aa)) enclose the tr-type G domain. Residues 488-495 (GHVDHGKT) form a G1 region. 488–495 (GHVDHGKT) is a binding site for GTP. Residues 513–517 (GITQR) are G2. Residues 538 to 541 (DTPG) are G3. GTP contacts are provided by residues 538–542 (DTPGH) and 592–595 (NKID). The interval 592–595 (NKID) is G4. Positions 628 to 630 (SAK) are G5.

It belongs to the TRAFAC class translation factor GTPase superfamily. Classic translation factor GTPase family. IF-2 subfamily.

It is found in the cytoplasm. Functionally, one of the essential components for the initiation of protein synthesis. Protects formylmethionyl-tRNA from spontaneous hydrolysis and promotes its binding to the 30S ribosomal subunits. Also involved in the hydrolysis of GTP during the formation of the 70S ribosomal complex. This is Translation initiation factor IF-2 from Bifidobacterium longum subsp. infantis (strain ATCC 15697 / DSM 20088 / JCM 1222 / NCTC 11817 / S12).